Consider the following 403-residue polypeptide: TPR repeat-containing protein Synpcc7942_0270 (403 aa).

TPR repeat units follow at residues 208–243 (AYLC…PEPA), 244–282 (VRYE…AIHK), 283–316 (LGAW…APQA), 317–350 (TVAL…DPND), and 351–387 (PSLY…QGSP).

This Synechococcus elongatus (strain ATCC 33912 / PCC 7942 / FACHB-805) (Anacystis nidulans R2) protein is TPR repeat-containing protein Synpcc7942_0270.